We begin with the raw amino-acid sequence, 108 residues long: Dormancy-associated protein homolog 1 (108 aa).

Residues 28–59 form a disordered region; the sequence is DIKGVGEGSSSKTVAAVAGSPGTPTTPGSARK. Serine 47 is subject to Phosphoserine. A Phosphothreonine modification is found at threonine 50.

It belongs to the DRM1/ARP family. Expressed mainly in the low bolt.

This chain is Dormancy-associated protein homolog 1, found in Arabidopsis thaliana (Mouse-ear cress).